The primary structure comprises 160 residues: Large ribosomal subunit protein uL15 (160 aa).

Residues 1–11 show a composition bias toward basic and acidic residues; the sequence is MKLNELRDNHG. Positions 1 to 39 are disordered; that stretch reads MKLNELRDNHGARPKSKRLGRGIGSGKGKTSGKGVKGQK. A compositionally biased stretch (gly residues) spans 21–35; that stretch reads RGIGSGKGKTSGKGV.

Belongs to the universal ribosomal protein uL15 family. In terms of assembly, part of the 50S ribosomal subunit.

Functionally, binds to the 23S rRNA. The sequence is that of Large ribosomal subunit protein uL15 from Granulibacter bethesdensis (strain ATCC BAA-1260 / CGDNIH1).